The primary structure comprises 255 residues: Aliphatic sulfonates import ATP-binding protein SsuB (255 aa).

One can recognise an ABC transporter domain in the interval 12-233 (LLLNAVSKHY…RLGSVRLAEL (222 aa)). 44 to 51 (GRSGGGKS) lines the ATP pocket.

This sequence belongs to the ABC transporter superfamily. Aliphatic sulfonates importer (TC 3.A.1.17.2) family. As to quaternary structure, the complex is composed of two ATP-binding proteins (SsuB), two transmembrane proteins (SsuC) and a solute-binding protein (SsuA).

Its subcellular location is the cell inner membrane. The enzyme catalyses ATP + H2O + aliphatic sulfonate-[sulfonate-binding protein]Side 1 = ADP + phosphate + aliphatic sulfonateSide 2 + [sulfonate-binding protein]Side 1.. Part of the ABC transporter complex SsuABC involved in aliphatic sulfonates import. Responsible for energy coupling to the transport system. This chain is Aliphatic sulfonates import ATP-binding protein SsuB, found in Escherichia coli O6:K15:H31 (strain 536 / UPEC).